Consider the following 250-residue polypeptide: 5-oxoprolinase subunit A (250 aa).

This sequence belongs to the LamB/PxpA family. As to quaternary structure, forms a complex composed of PxpA, PxpB and PxpC.

It catalyses the reaction 5-oxo-L-proline + ATP + 2 H2O = L-glutamate + ADP + phosphate + H(+). Its function is as follows. Catalyzes the cleavage of 5-oxoproline to form L-glutamate coupled to the hydrolysis of ATP to ADP and inorganic phosphate. The chain is 5-oxoprolinase subunit A from Pseudomonas fluorescens (strain ATCC BAA-477 / NRRL B-23932 / Pf-5).